A 370-amino-acid polypeptide reads, in one-letter code: Cathepsin B-like cysteine proteinase 3 (370 aa).

The signal sequence occupies residues 1–16 (MLKVYFLALFLAGCSA). A propeptide spanning residues 17 to 91 (FVLDEIRGIN…FVRGEIVPEP (75 aa)) is cleaved from the precursor. 6 cysteine pairs are disulfide-bonded: Cys-105/Cys-134, Cys-117/Cys-162, Cys-153/Cys-210, Cys-154/Cys-158, Cys-190/Cys-214, and Cys-198/Cys-202. The active site involves Cys-120. Asn-138 carries an N-linked (GlcNAc...) asparagine glycan. Residues His-284 and Asn-304 contribute to the active site.

The protein belongs to the peptidase C1 family.

The protein is Cathepsin B-like cysteine proteinase 3 (cpr-3) of Caenorhabditis elegans.